A 139-amino-acid polypeptide reads, in one-letter code: MIVDTSAVVALVQGERPHATLVAAALAGAHSPVMSAPTVAECLIVLTARHGPVARTIFERLRSEIGLSVSSFTAEHAAATQRAFLRYGKGRHRAALNFGDCMTYATAQLGHQPLLAVGNDFPQTDLEFRGVVGYWPGVA.

Positions 1–127 (MIVDTSAVVA…GNDFPQTDLE (127 aa)) constitute a PINc domain. Mg(2+) contacts are provided by Asp4 and Asp100.

It belongs to the PINc/VapC protein family. Requires Mg(2+) as cofactor.

Toxic component of a type II toxin-antitoxin (TA) system. An RNase. Its cognate antitoxin is VapB36. This is Ribonuclease VapC36 from Mycobacterium tuberculosis (strain ATCC 25618 / H37Rv).